A 149-amino-acid chain; its full sequence is L-alanine exporter AlaE (149 aa).

4 helical membrane passes run 16–36 (FAMV…LSGM), 46–66 (LVAI…RDLI), 83–105 (ADVL…TVGA), and 115–135 (SSNI…LDYC).

The protein belongs to the AlaE exporter family.

Its subcellular location is the cell inner membrane. Exports L-alanine. The protein is L-alanine exporter AlaE of Salmonella typhimurium (strain LT2 / SGSC1412 / ATCC 700720).